The following is a 700-amino-acid chain: Beta-galactosidase Bga (700 aa).

Residue Arg103 participates in substrate binding. Cys107 is a Zn(2+) binding site. Residue Asn141 coordinates substrate. The active-site Proton donor is the Glu142. The Zn(2+) site is built by Cys151, Cys153, and Cys156. The active-site Nucleophile is Glu312. Residues Trp320 and 360 to 363 each bind substrate; that span reads EQYH. Positions 648–658 are enriched in acidic residues; it reads DPESLAVDDTD. The tract at residues 648-674 is disordered; the sequence is DPESLAVDDTDRDGFDPMADDDKDSSA.

It belongs to the glycosyl hydrolase 42 family.

The enzyme catalyses Hydrolysis of terminal non-reducing beta-D-galactose residues in beta-D-galactosides.. Its activity is regulated as follows. Requires 4 M NaCl or KCl for maximal activity. Functionally, cleaves o-nitrophenyl-beta-D-galactopyranoside (ONPG) in vitro. The chain is Beta-galactosidase Bga from Halorubrum lacusprofundi (strain ATCC 49239 / DSM 5036 / JCM 8891 / ACAM 34).